The following is a 161-amino-acid chain: Beta-lactoglobulin-2 (161 aa).

Disulfide bonds link cysteine 66–cysteine 159 and cysteine 106–cysteine 119.

Belongs to the calycin superfamily. Lipocalin family. As to quaternary structure, monomer. Synthesized in mammary gland and secreted in milk.

The protein localises to the secreted. Its function is as follows. Primary component of whey, it binds retinol and is probably involved in the transport of that molecule. This is Beta-lactoglobulin-2 (LGB2) from Canis lupus familiaris (Dog).